The chain runs to 666 residues: Probable potassium transport system protein Kup (666 aa).

12 helical membrane-spanning segments follow: residues 16-36, 58-78, 100-120, 141-161, 165-185, 221-241, 253-273, 294-314, 343-363, 373-393, 399-419, and 424-444; these read GFII…LYTM, ISLI…LIAL, PWLI…GALT, IYQN…VLFG, FGTG…FSFL, IFIL…YSDL, WPFV…WILA, VYLV…LISG, LYIP…VLAF, YGLA…YYLI, PILA…FFLA, and FMHG…VMFI.

Belongs to the HAK/KUP transporter (TC 2.A.72) family.

Its subcellular location is the cell membrane. It carries out the reaction K(+)(in) + H(+)(in) = K(+)(out) + H(+)(out). In terms of biological role, transport of potassium into the cell. Likely operates as a K(+):H(+) symporter. The chain is Probable potassium transport system protein Kup from Streptococcus pyogenes serotype M4 (strain MGAS10750).